The chain runs to 156 residues: Myosin regulatory light chain B, smooth adductor muscle (156 aa).

Blocked amino end (Ala) is present on Ala1. EF-hand domains follow at residues 15-50 (KQIQ…LGRT) and 84-119 (DTEE…MGDN). Ca(2+)-binding residues include Asp28, Asn30, Asp32, and Asp39.

Its function is as follows. In molluscan muscle, calcium regulation is associated with myosin rather than with actin. Muscle myosin contains two types of light chains: the catalytic light chain, essential for ATPase activity, and the regulatory light chain, a calcium-binding protein responsible for Ca(2+) dependent binding and Ca(2+) dependent Mg-ATPase activity. The polypeptide is Myosin regulatory light chain B, smooth adductor muscle (Mizuhopecten yessoensis (Japanese scallop)).